Reading from the N-terminus, the 91-residue chain is Cell division topological specificity factor (91 aa).

It belongs to the MinE family.

Its function is as follows. Prevents the cell division inhibition by proteins MinC and MinD at internal division sites while permitting inhibition at polar sites. This ensures cell division at the proper site by restricting the formation of a division septum at the midpoint of the long axis of the cell. The sequence is that of Cell division topological specificity factor from Chloroflexus aurantiacus (strain ATCC 29366 / DSM 635 / J-10-fl).